We begin with the raw amino-acid sequence, 359 residues long: Probable dual-specificity RNA methyltransferase RlmN (359 aa).

The active-site Proton acceptor is the glutamate 91. One can recognise a Radical SAM core domain in the interval 97 to 329 (QHYGHSVCVT…KKNGVNCVVR (233 aa)). A disulfide bridge links cysteine 104 with cysteine 340. Positions 111, 115, and 118 each coordinate [4Fe-4S] cluster. S-adenosyl-L-methionine is bound by residues 163–164 (GE), serine 195, 218–220 (SLH), and asparagine 296. Cysteine 340 serves as the catalytic S-methylcysteine intermediate.

Belongs to the radical SAM superfamily. RlmN family. Requires [4Fe-4S] cluster as cofactor.

The protein resides in the cytoplasm. The enzyme catalyses adenosine(2503) in 23S rRNA + 2 reduced [2Fe-2S]-[ferredoxin] + 2 S-adenosyl-L-methionine = 2-methyladenosine(2503) in 23S rRNA + 5'-deoxyadenosine + L-methionine + 2 oxidized [2Fe-2S]-[ferredoxin] + S-adenosyl-L-homocysteine. It catalyses the reaction adenosine(37) in tRNA + 2 reduced [2Fe-2S]-[ferredoxin] + 2 S-adenosyl-L-methionine = 2-methyladenosine(37) in tRNA + 5'-deoxyadenosine + L-methionine + 2 oxidized [2Fe-2S]-[ferredoxin] + S-adenosyl-L-homocysteine. In terms of biological role, specifically methylates position 2 of adenine 2503 in 23S rRNA and position 2 of adenine 37 in tRNAs. This Streptococcus pyogenes serotype M18 (strain MGAS8232) protein is Probable dual-specificity RNA methyltransferase RlmN.